The sequence spans 413 residues: GTPase HflX (413 aa).

The Hflx-type G domain maps to 200–386 (VRVALVGYTN…KVYETVREIH (187 aa)). GTP-binding positions include 206-213 (GYTNVGKS), 231-235 (FATLD), 252-255 (DTVG), 318-321 (NKID), and 364-366 (SAT). Mg(2+) is bound by residues S213 and T233.

The protein belongs to the TRAFAC class OBG-HflX-like GTPase superfamily. HflX GTPase family. In terms of assembly, monomer. Associates with the 50S ribosomal subunit. Requires Mg(2+) as cofactor.

It localises to the cytoplasm. Functionally, GTPase that associates with the 50S ribosomal subunit and may have a role during protein synthesis or ribosome biogenesis. The polypeptide is GTPase HflX (Flavobacterium psychrophilum (strain ATCC 49511 / DSM 21280 / CIP 103535 / JIP02/86)).